The chain runs to 456 residues: Ribosomal RNA small subunit methyltransferase F (456 aa).

S-adenosyl-L-methionine is bound by residues 109–115, E133, R138, and D177; that span reads AAAPGGK. Catalysis depends on C230, which acts as the Nucleophile.

Belongs to the class I-like SAM-binding methyltransferase superfamily. RsmB/NOP family.

It is found in the cytoplasm. The enzyme catalyses cytidine(1400) in 16S rRNA + S-adenosyl-L-methionine = 5-methylcytidine(1400) in 16S rRNA + S-adenosyl-L-homocysteine + H(+). The catalysed reaction is cytidine(1404) in 16S rRNA + S-adenosyl-L-methionine = 5-methylcytidine(1404) in 16S rRNA + S-adenosyl-L-homocysteine + H(+). It carries out the reaction cytidine(1407) in 16S rRNA + S-adenosyl-L-methionine = 5-methylcytidine(1407) in 16S rRNA + S-adenosyl-L-homocysteine + H(+). Specifically methylates the cytosines at positions 1400 (m5C1400), 1404 (m5C1404) and 1407 (m5C1407) of 16S rRNA. C1400, C1404 and C1407 are methylated in a 30S subunit substrate, but only C1400 and C1404 are methylated when naked 16S rRNA is the substrate. Methylation by RsmF may facilitate growth at temperatures outside the optimal growth temperature. The chain is Ribosomal RNA small subunit methyltransferase F from Thermus thermophilus (strain ATCC 27634 / DSM 579 / HB8).